The sequence spans 271 residues: ALMLQGVDLLADAVAVTMGPKGRTVIIEQSWGSPKLVQDVANNTNEEAGDGTTTATVLARGANPVEIRRGVMLAVDAVIAELKKTLNDELEIIEGMKFDRGYISPYFINTSKCEFQDAYVLLSEKKISSVQSIVPALEIANAHRKPLVIIAEDVDGEALSTLVLNRVGLQVVAVKAPGFGDNRKNQLKDMAIATGGAVFGEEGLNLNLEDVQAHDLGKIQEITEQLDITTSEYEKEKVTDALNATRAAVEEGIVLGGGCALLRIGIEIIKR.

Residues Ser-30 and Ser-33 each carry the phosphoserine modification. 50-54 serves as a coordination point for ATP; it reads DGTTT. Lys-83 bears the N6-acetyllysine mark. Residues Lys-84, Lys-97, and Lys-112 each carry the N6-acetyllysine; alternate modification. 3 positions are modified to N6-succinyllysine; alternate: Lys-84, Lys-97, and Lys-112. The residue at position 125 (Lys-125) is an N6-acetyllysine. The residue at position 126 (Lys-126) is an N6-acetyllysine; alternate. Residue Lys-126 is modified to N6-succinyllysine; alternate. Lys-145 bears the N6-acetyllysine mark. An N6-succinyllysine modification is found at Lys-175. N6-acetyllysine is present on residues Lys-188 and Lys-237. Gly-257 contributes to the ATP binding site. Lys-270 is subject to N6-acetyllysine.

This sequence belongs to the chaperonin (HSP60) family. Homoheptamer arranged in a ring structure. The functional units of these chaperonins consist of heptameric rings of the large subunit Hsp60, which function as a back-to-back double ring. Interacts with 2 heptameric Hsp10 rings to form the symmetrical football complex. Interacts with HRAS. Interacts with ATAD3A. Interacts with ETFBKMT and EEF1AKMT3. Interacts with MFHAS1. Detected at higher levels in caput epididymal spermatazoa than in cauda epididymal spermatazoa (at protein level).

Its subcellular location is the mitochondrion matrix. It catalyses the reaction ATP + H2O + a folded polypeptide = ADP + phosphate + an unfolded polypeptide.. In terms of biological role, chaperonin implicated in mitochondrial protein import and macromolecular assembly. Together with Hsp10, facilitates the correct folding of imported proteins. May also prevent misfolding and promote the refolding and proper assembly of unfolded polypeptides generated under stress conditions in the mitochondrial matrix. The functional units of these chaperonins consist of heptameric rings of the large subunit Hsp60, which function as a back-to-back double ring. In a cyclic reaction, Hsp60 ring complexes bind one unfolded substrate protein per ring, followed by the binding of ATP and association with 2 heptameric rings of the co-chaperonin Hsp10. This leads to sequestration of the substrate protein in the inner cavity of Hsp60 where, for a certain period of time, it can fold undisturbed by other cell components. Synchronous hydrolysis of ATP in all Hsp60 subunits results in the dissociation of the chaperonin rings and the release of ADP and the folded substrate protein. In Mesocricetus auratus (Golden hamster), this protein is 60 kDa heat shock protein, mitochondrial.